The primary structure comprises 122 residues: NADH-quinone oxidoreductase subunit A (122 aa).

3 helical membrane-spanning segments follow: residues 10-30 (MIVL…LTLG), 66-86 (IFAL…PWAV), and 91-111 (LGLF…VGLA).

This sequence belongs to the complex I subunit 3 family. NDH-1 is composed of 14 different subunits. Subunits NuoA, H, J, K, L, M, N constitute the membrane sector of the complex.

The protein localises to the cell membrane. The enzyme catalyses a quinone + NADH + 5 H(+)(in) = a quinol + NAD(+) + 4 H(+)(out). NDH-1 shuttles electrons from NADH, via FMN and iron-sulfur (Fe-S) centers, to quinones in the respiratory chain. The immediate electron acceptor for the enzyme in this species is believed to be a menaquinone. Couples the redox reaction to proton translocation (for every two electrons transferred, four hydrogen ions are translocated across the cytoplasmic membrane), and thus conserves the redox energy in a proton gradient. This Bacillus anthracis protein is NADH-quinone oxidoreductase subunit A.